The chain runs to 242 residues: Phosphoribosylaminoimidazole-succinocarboxamide synthase (242 aa).

It belongs to the SAICAR synthetase family.

It carries out the reaction 5-amino-1-(5-phospho-D-ribosyl)imidazole-4-carboxylate + L-aspartate + ATP = (2S)-2-[5-amino-1-(5-phospho-beta-D-ribosyl)imidazole-4-carboxamido]succinate + ADP + phosphate + 2 H(+). It functions in the pathway purine metabolism; IMP biosynthesis via de novo pathway; 5-amino-1-(5-phospho-D-ribosyl)imidazole-4-carboxamide from 5-amino-1-(5-phospho-D-ribosyl)imidazole-4-carboxylate: step 1/2. The protein is Phosphoribosylaminoimidazole-succinocarboxamide synthase of Ehrlichia chaffeensis (strain ATCC CRL-10679 / Arkansas).